The chain runs to 279 residues: 2-dehydro-3-deoxyphosphooctonate aldolase (279 aa).

Belongs to the KdsA family.

It localises to the cytoplasm. It carries out the reaction D-arabinose 5-phosphate + phosphoenolpyruvate + H2O = 3-deoxy-alpha-D-manno-2-octulosonate-8-phosphate + phosphate. It functions in the pathway carbohydrate biosynthesis; 3-deoxy-D-manno-octulosonate biosynthesis; 3-deoxy-D-manno-octulosonate from D-ribulose 5-phosphate: step 2/3. It participates in bacterial outer membrane biogenesis; lipopolysaccharide biosynthesis. This Methylobacillus flagellatus (strain ATCC 51484 / DSM 6875 / VKM B-1610 / KT) protein is 2-dehydro-3-deoxyphosphooctonate aldolase.